We begin with the raw amino-acid sequence, 366 residues long: Beta sliding clamp (366 aa).

Belongs to the beta sliding clamp family. As to quaternary structure, forms a ring-shaped head-to-tail homodimer around DNA which binds and tethers DNA polymerases and other proteins to the DNA. The DNA replisome complex has a single clamp-loading complex (3 tau and 1 each of delta, delta', psi and chi subunits) which binds 3 Pol III cores (1 core on the leading strand and 2 on the lagging strand) each with a beta sliding clamp dimer. Additional proteins in the replisome are other copies of gamma, psi and chi, Ssb, DNA helicase and RNA primase.

It localises to the cytoplasm. In terms of biological role, confers DNA tethering and processivity to DNA polymerases and other proteins. Acts as a clamp, forming a ring around DNA (a reaction catalyzed by the clamp-loading complex) which diffuses in an ATP-independent manner freely and bidirectionally along dsDNA. Initially characterized for its ability to contact the catalytic subunit of DNA polymerase III (Pol III), a complex, multichain enzyme responsible for most of the replicative synthesis in bacteria; Pol III exhibits 3'-5' exonuclease proofreading activity. The beta chain is required for initiation of replication as well as for processivity of DNA replication. The chain is Beta sliding clamp (dnaN) from Buchnera aphidicola subsp. Rhopalosiphum padi.